Here is a 168-residue protein sequence, read N- to C-terminus: Thiol peroxidase (168 aa).

Positions 19–168 (PQAGSKAQTF…YEAALAVLKA (150 aa)) constitute a Thioredoxin domain. Catalysis depends on cysteine 61, which acts as the Cysteine sulfenic acid (-SOH) intermediate. A disulfide bridge connects residues cysteine 61 and cysteine 95.

It belongs to the peroxiredoxin family. Tpx subfamily. In terms of assembly, homodimer.

The enzyme catalyses a hydroperoxide + [thioredoxin]-dithiol = an alcohol + [thioredoxin]-disulfide + H2O. Functionally, thiol-specific peroxidase that catalyzes the reduction of hydrogen peroxide and organic hydroperoxides to water and alcohols, respectively. Plays a role in cell protection against oxidative stress by detoxifying peroxides. The polypeptide is Thiol peroxidase (Shigella dysenteriae).